Consider the following 569-residue polypeptide: Urease subunit alpha (569 aa).

The Urease domain occupies 131–569 (GGVDAHIHFI…VAMAQRYFLF (439 aa)). His136, His138, and Lys219 together coordinate Ni(2+). Lys219 bears the N6-carboxylysine mark. Residue His221 coordinates substrate. Residues His248 and His274 each coordinate Ni(2+). His322 serves as the catalytic Proton donor. Asp362 provides a ligand contact to Ni(2+).

Belongs to the metallo-dependent hydrolases superfamily. Urease alpha subunit family. In terms of assembly, heterotrimer of UreA (gamma), UreB (beta) and UreC (alpha) subunits. Three heterotrimers associate to form the active enzyme. It depends on Ni cation as a cofactor. In terms of processing, carboxylation allows a single lysine to coordinate two nickel ions.

The protein localises to the cytoplasm. The enzyme catalyses urea + 2 H2O + H(+) = hydrogencarbonate + 2 NH4(+). It participates in nitrogen metabolism; urea degradation; CO(2) and NH(3) from urea (urease route): step 1/1. The sequence is that of Urease subunit alpha from Geobacillus kaustophilus (strain HTA426).